Reading from the N-terminus, the 245-residue chain is Large ribosomal subunit protein uL3 (245 aa).

The residue at position 151 (Q151) is an N5-methylglutamine. Positions 214-245 (KDAPQPGKYRLANSAAPQPAEADAASDTGAQA) are disordered. Low complexity predominate over residues 225-245 (ANSAAPQPAEADAASDTGAQA).

It belongs to the universal ribosomal protein uL3 family. In terms of assembly, part of the 50S ribosomal subunit. Forms a cluster with proteins L14 and L19. Methylated by PrmB.

Functionally, one of the primary rRNA binding proteins, it binds directly near the 3'-end of the 23S rRNA, where it nucleates assembly of the 50S subunit. This is Large ribosomal subunit protein uL3 from Methylocella silvestris (strain DSM 15510 / CIP 108128 / LMG 27833 / NCIMB 13906 / BL2).